The chain runs to 289 residues: (+)-kolavelool synthase (289 aa).

It belongs to the diterpene synthase family.

It carries out the reaction (+)-kolavenyl diphosphate + H2O = (+)-kolavelool + diphosphate. Involved in the biosynthesis of (+)-O-methylkolavelool. Catalyzes the biosynthesis of (+)-kolavelool from (+)-kolavenyl diphosphate via the release of the diphosphate moiety through the nucleophilic addition of a water molecule. This is (+)-kolavelool synthase from Herpetosiphon aurantiacus (strain ATCC 23779 / DSM 785 / 114-95).